The chain runs to 170 residues: MORN repeat-containing protein 5 (170 aa).

MORN repeat units follow at residues 8–30 (YFGE…TDTR), 31–53 (YIGE…SGSR), and 54–75 (FDAI…DGLQ).

In terms of tissue distribution, only detected in testis (at protein level).

The protein resides in the cell projection. Its subcellular location is the cilium. It is found in the flagellum. In Mus musculus (Mouse), this protein is MORN repeat-containing protein 5 (Morn5).